A 282-amino-acid polypeptide reads, in one-letter code: Complement component 1 Q subcomponent-binding protein, mitochondrial (282 aa).

Residues 1–70 (MLPLLRCVPR…PRGPCACGCG (70 aa)) constitute a mitochondrion transit peptide. The tract at residues 76 to 93 (TEGDKAFVDFLNDEIKEE) is C1q binding. At Lys91 the chain carries N6-acetyllysine. A disordered region spans residues 137 to 163 (NSIPPTFDGEEEPTQGQKVEEQEPELT). The interaction with MAVS stretch occupies residues 168–213 (FVVEVIKNDDGKKALVLDCHYPEDEVGQEDEAESDIFSIREVSFQS). Tyr188 carries the phosphotyrosine modification. Ser201 and Ser205 each carry phosphoserine.

It belongs to the MAM33 family. In terms of assembly, homotrimer; three monomers form a donut-shaped structure with an unusually asymmetric charge distribution on the surface. Interacts with CDK13, HRK, VTN, NFYB, ADRA1B, FOXC1, DDX21, DDX50, NCL, SRSF1 and SRSF9. Interacts with CD93; the association may represent a cell surface C1q receptor. Interacts with KRT1; the association represents a cell surface kininogen receptor. Interacts with CD209; the interaction is indicative for a C1q:C1QBP:CD209 signaling complex. Interacts with FBL and RRP1; the respective interactions with C1QBP are competitive. Probably associates with the mitoribosome. Interacts with MAVS; the interaction occurs upon viral transfection. Interacts with PPIF. Interacts with U2AF1L4. Interacts with PLEKHN1. Interacts with VGF-derived peptide TLQP-21. Interacts with MRE11 and RAD50; forming the MRC (MRE11-RAD50-C1QBP) complex that inhibits the activity of MRE11. As to quaternary structure, (Microbial infection) Interacts with Rubella virus capsid protein; the interaction occurs in mitochondria. (Microbial infection) Interacts with L.monocytogenes InlB.

The protein localises to the mitochondrion matrix. The protein resides in the nucleus. It is found in the cell membrane. Its subcellular location is the secreted. It localises to the cytoplasm. The protein localises to the nucleolus. Multifunctional and multicompartmental protein involved in inflammation and infection processes, ribosome biogenesis, protein synthesis in mitochondria, regulation of apoptosis, transcriptional regulation and pre-mRNA splicing. At the cell surface is thought to act as an endothelial receptor for plasma proteins of the complement and kallikrein-kinin cascades. Putative receptor for C1q; specifically binds to the globular 'heads' of C1q thus inhibiting C1; may perform the receptor function through a complex with C1qR/CD93. In complex with cytokeratin-1/KRT1 is a high affinity receptor for kininogen-1/HMWK. Can also bind other plasma proteins, such as coagulation factor XII leading to its autoactivation. May function to bind initially fluid kininogen-1 to the cell membrane. The secreted form may enhance both extrinsic and intrinsic coagulation pathways. It is postulated that the cell surface form requires docking with transmembrane proteins for downstream signaling which might be specific for a cell-type or response. By acting as C1q receptor is involved in chemotaxis of immature dendritic cells and neutrophils and is proposed to signal through CD209/DC-SIGN on immature dendritic cells, through integrin alpha-4/beta-1 during trophoblast invasion of the decidua, and through integrin beta-1 during endothelial cell adhesion and spreading. Signaling involved in inhibition of innate immune response is implicating the PI3K-AKT/PKB pathway. Required for protein synthesis in mitochondria. In mitochondrial translation may be involved in formation of functional 55S mitoribosomes; the function seems to involve its RNA-binding activity. Acts as a RNA modification reader, which specifically recognizes and binds mitochondrial RNAs modified by C5-methylcytosine (m5C) in response to stress, and promotes recruitment of the mitochondrial degradosome complex, leading to their degradation. May be involved in the nucleolar ribosome maturation process; the function may involve the exchange of FBL for RRP1 in the association with pre-ribosome particles. Involved in regulation of RNA splicing by inhibiting the RNA-binding capacity of SRSF1 and its phosphorylation. Is required for the nuclear translocation of splicing factor U2AF1L4. Involved in regulation of CDKN2A- and HRK-mediated apoptosis. Stabilizes mitochondrial CDKN2A isoform smARF. May be involved in regulation of FOXC1 transcriptional activity and NFY/CCAAT-binding factor complex-mediated transcription. May play a role in antibacterial defense as it can bind to cell surface hyaluronan and inhibit Streptococcus pneumoniae hyaluronate lyase. May be involved in modulation of the immune response; ligation by HCV core protein is resulting in suppression of interleukin-12 production in monocyte-derived dendritic cells. Involved in regulation of antiviral response by inhibiting RIGI- and IFIH1-mediated signaling pathways probably involving its association with MAVS after viral infection. Acts as a regulator of DNA repair via homologous recombination by inhibiting the activity of MRE11: interacts with unphosphorylated MRE11 and RAD50 in absence of DNA damage, preventing formation and activity of the MRN complex. Following DNA damage, dissociates from phosphorylated MRE11, allowing formation of the MRN complex. Functionally, (Microbial infection) During bacterial infection processes acts as an attachment site for microbial proteins, including Listeria monocytogenes internalin B (InlB). The chain is Complement component 1 Q subcomponent-binding protein, mitochondrial (C1QBP) from Chlorocebus aethiops (Green monkey).